We begin with the raw amino-acid sequence, 136 residues long: MSINEYYVYAGDYANPSHFEGNLIPDKVFNTPFEAWSWIESKNGFSYRYVEVTDWRGTKYPKDHYYVNPSKVNFLLFAGDNYYPCGGYDDLIAYAETEDKLRDIIKENENKPDYGSNRFDWWQIVNAHTHAIVDRG.

This is an uncharacterized protein from Enterobacteria phage T4 (Bacteriophage T4).